Consider the following 305-residue polypeptide: GMP synthase [glutamine-hydrolyzing] subunit B (305 aa).

The 183-residue stretch at 2 to 184 folds into the GMPS ATP-PPase domain; the sequence is VKPEKFIPKA…LKLPDEICER (183 aa). Residue 29 to 35 coordinates ATP; it reads SGGVDSS.

Heterodimer composed of a glutamine amidotransferase subunit (A) and a GMP-binding subunit (B).

The enzyme catalyses XMP + L-glutamine + ATP + H2O = GMP + L-glutamate + AMP + diphosphate + 2 H(+). It functions in the pathway purine metabolism; GMP biosynthesis; GMP from XMP (L-Gln route): step 1/1. Functionally, catalyzes the synthesis of GMP from XMP. This is GMP synthase [glutamine-hydrolyzing] subunit B from Methanosarcina barkeri (strain Fusaro / DSM 804).